Here is a 135-residue protein sequence, read N- to C-terminus: Small ribosomal subunit protein bS16 (135 aa).

The span at 105–120 (DEKKKPVLKPKTEKAA) shows a compositional bias: basic and acidic residues. The tract at residues 105-135 (DEKKKPVLKPKTEKAAPEAAAPEAEATEEQA) is disordered.

This sequence belongs to the bacterial ribosomal protein bS16 family.

The protein is Small ribosomal subunit protein bS16 of Clavibacter sepedonicus (Clavibacter michiganensis subsp. sepedonicus).